The sequence spans 187 residues: Capsid protein VP10 (187 aa).

C45 and C51 are disulfide-bonded.

It is found in the virion. Its function is as follows. VP10 self-assembles, together with capsid protein VP4, to form an icosahedral caspid of 87 nm in diameter, with a T=43 symmetry and composed of 420 hexamers and 12 pentamers. VP4 proteins arrange into hexons, while VP10 proteins form the pentameric densities located at the 5-fold axes in the virion. The stoichiometry of VP4:VP10 is 42:1. The polypeptide is Capsid protein VP10 (Sulfolobus polyhedral virus 1 (SPV1)).